The sequence spans 411 residues: Glycerol-3-phosphate dehydrogenase [NAD(+)] (411 aa).

NAD(+) is bound by residues G71–G76, F103, and F159. K182 is a substrate binding site. A215 lines the NAD(+) pocket. K275 functions as the Proton acceptor in the catalytic mechanism. NAD(+) is bound by residues R340 and Q369. R340 to N341 is a binding site for substrate.

The protein belongs to the NAD-dependent glycerol-3-phosphate dehydrogenase family.

The catalysed reaction is sn-glycerol 3-phosphate + NAD(+) = dihydroxyacetone phosphate + NADH + H(+). The protein is Glycerol-3-phosphate dehydrogenase [NAD(+)] (GPD) of Lachancea thermotolerans (Yeast).